The primary structure comprises 100 residues: NADH-quinone oxidoreductase subunit K 2 (100 aa).

3 helical membrane passes run 4–24 (LWWS…GVLL), 28–48 (ILIV…NFIA), and 60–80 (IFAI…LGIL).

The protein belongs to the complex I subunit 4L family. NDH-1 is composed of 14 different subunits. Subunits NuoA, H, J, K, L, M, N constitute the membrane sector of the complex.

It localises to the cell inner membrane. The enzyme catalyses a quinone + NADH + 5 H(+)(in) = a quinol + NAD(+) + 4 H(+)(out). Its function is as follows. NDH-1 shuttles electrons from NADH, via FMN and iron-sulfur (Fe-S) centers, to quinones in the respiratory chain. The immediate electron acceptor for the enzyme in this species is believed to be ubiquinone. Couples the redox reaction to proton translocation (for every two electrons transferred, four hydrogen ions are translocated across the cytoplasmic membrane), and thus conserves the redox energy in a proton gradient. In Rhizobium meliloti (strain 1021) (Ensifer meliloti), this protein is NADH-quinone oxidoreductase subunit K 2.